Here is a 413-residue protein sequence, read N- to C-terminus: Serine hydroxymethyltransferase (413 aa).

(6S)-5,6,7,8-tetrahydrofolate-binding positions include leucine 117 and 121-123 (GHL). Lysine 226 carries the N6-(pyridoxal phosphate)lysine modification. (6S)-5,6,7,8-tetrahydrofolate contacts are provided by residues glutamate 239 and 349 to 351 (SPF).

It belongs to the SHMT family. In terms of assembly, homodimer. The cofactor is pyridoxal 5'-phosphate.

The protein resides in the cytoplasm. It carries out the reaction (6R)-5,10-methylene-5,6,7,8-tetrahydrofolate + glycine + H2O = (6S)-5,6,7,8-tetrahydrofolate + L-serine. It functions in the pathway one-carbon metabolism; tetrahydrofolate interconversion. It participates in amino-acid biosynthesis; glycine biosynthesis; glycine from L-serine: step 1/1. Catalyzes the reversible interconversion of serine and glycine with tetrahydrofolate (THF) serving as the one-carbon carrier. This reaction serves as the major source of one-carbon groups required for the biosynthesis of purines, thymidylate, methionine, and other important biomolecules. Also exhibits THF-independent aldolase activity toward beta-hydroxyamino acids, producing glycine and aldehydes, via a retro-aldol mechanism. The protein is Serine hydroxymethyltransferase of Bacillus mycoides (strain KBAB4) (Bacillus weihenstephanensis).